The sequence spans 178 residues: tRNA (cytidine(56)-2'-O)-methyltransferase (178 aa).

S-adenosyl-L-methionine is bound by residues Leu-84, Gly-112 to Val-116, and Val-130 to Glu-137.

Belongs to the aTrm56 family. In terms of assembly, homodimer.

Its subcellular location is the cytoplasm. It carries out the reaction cytidine(56) in tRNA + S-adenosyl-L-methionine = 2'-O-methylcytidine(56) in tRNA + S-adenosyl-L-homocysteine + H(+). Functionally, specifically catalyzes the AdoMet-dependent 2'-O-ribose methylation of cytidine at position 56 in tRNAs. This is tRNA (cytidine(56)-2'-O)-methyltransferase from Methanocella arvoryzae (strain DSM 22066 / NBRC 105507 / MRE50).